A 427-amino-acid polypeptide reads, in one-letter code: Enolase (427 aa).

A (2R)-2-phosphoglycerate-binding site is contributed by Gln-163. Glu-205 (proton donor) is an active-site residue. 3 residues coordinate Mg(2+): Asp-242, Glu-283, and Asp-310. Positions 335, 364, 365, and 386 each coordinate (2R)-2-phosphoglycerate. The active-site Proton acceptor is the Lys-335.

It belongs to the enolase family. The cofactor is Mg(2+).

The protein resides in the cytoplasm. The protein localises to the secreted. It localises to the cell surface. It catalyses the reaction (2R)-2-phosphoglycerate = phosphoenolpyruvate + H2O. The protein operates within carbohydrate degradation; glycolysis; pyruvate from D-glyceraldehyde 3-phosphate: step 4/5. In terms of biological role, catalyzes the reversible conversion of 2-phosphoglycerate (2-PG) into phosphoenolpyruvate (PEP). It is essential for the degradation of carbohydrates via glycolysis. This is Enolase from Salinispora tropica (strain ATCC BAA-916 / DSM 44818 / JCM 13857 / NBRC 105044 / CNB-440).